A 438-amino-acid chain; its full sequence is Glutamate-1-semialdehyde 2,1-aminomutase (438 aa).

K278 is modified (N6-(pyridoxal phosphate)lysine).

Belongs to the class-III pyridoxal-phosphate-dependent aminotransferase family. HemL subfamily. In terms of assembly, homodimer. Pyridoxal 5'-phosphate serves as cofactor.

It is found in the cytoplasm. The enzyme catalyses (S)-4-amino-5-oxopentanoate = 5-aminolevulinate. Its pathway is porphyrin-containing compound metabolism; protoporphyrin-IX biosynthesis; 5-aminolevulinate from L-glutamyl-tRNA(Glu): step 2/2. The sequence is that of Glutamate-1-semialdehyde 2,1-aminomutase from Delftia acidovorans (strain DSM 14801 / SPH-1).